Consider the following 1015-residue polypeptide: Collagen alpha-2(I) chain (1015 aa).

The tract at residues 1 to 1015 is disordered; sequence SGGFDFSFLP…FGYEGDFYRA (1015 aa). 4-hydroxyproline is present on residues Pro-10 and Pro-13. Gly residues predominate over residues 20–30; that stretch reads KGVGLGPGPMG. The residue at position 38 (Pro-38) is a 4-hydroxyproline. Over residues 43–69 the composition is skewed to low complexity; the sequence is QGPAGEPGEPGQTGPAGARGPAGPPGK. Positions 70–84 are enriched in basic and acidic residues; the sequence is AGEDGHPGKPGRPGE. Lys-106 is subject to 5-hydroxylysine; alternate. Lys-106 carries O-linked (Gal...) hydroxylysine; alternate glycosylation. Composition is skewed to low complexity over residues 140-169, 194-208, and 235-250; these read VGAP…SAGP, AGPR…VSGP, and PGPV…RGLV. The span at 302 to 311 shows a compositional bias: gly residues; that stretch reads GLRGGPGSRG. Low complexity predominate over residues 324–340; that stretch reads PAGSRGASGPAGVRGPS. 2 positions are modified to 4-hydroxyproline: Pro-346 and Pro-349. A compositionally biased stretch (gly residues) spans 441–450; that stretch reads GVQGGKGEQG. Over residues 497–514 the composition is skewed to low complexity; it reads PGESGAAGPVGPIGSRGP. The segment covering 534 to 545 has biased composition (gly residues); it reads GTAGPGSGGLPG. 2 stretches are compositionally biased toward low complexity: residues 568–612 and 619–639; these read VGTT…PRGS and VGPA…QPGA. The segment covering 640–649 has biased composition (basic and acidic residues); it reads KGERGTKGPK. The segment covering 657-670 has biased composition (low complexity); that stretch reads PTGPVGAAGPSGPN. The segment covering 674–686 has biased composition (gly residues); the sequence is GPAGGRGDGGPPG. Low complexity predominate over residues 687 to 697; the sequence is LTGFPGAAGRT. Gly residues predominate over residues 734 to 743; sequence GETGAGGPPG. Composition is skewed to low complexity over residues 751–778, 786–799, 846–868, and 877–897; these read SGEP…LGLP, LPGV…PGPL, YAGN…VGPA, and PGPA…PSGP. A compositionally biased stretch (basic and acidic residues) spans 901–912; sequence RGDKGEAGDKGP. A compositionally biased stretch (pro residues) spans 987-997; it reads PAGPPGPPGPP.

The protein belongs to the fibrillar collagen family. In terms of assembly, trimers of one alpha 2(I) and two alpha 1(I) chains. Interacts (via C-terminus) with TMEM131 (via PapD-L domain); the interaction is direct and is involved in assembly and TRAPPIII ER-to-Golgi transport complex-dependent secretion of collagen. Post-translationally, prolines at the third position of the tripeptide repeating unit (G-X-Y) are hydroxylated in some or all of the chains. In terms of tissue distribution, expressed in bones.

It is found in the secreted. Its subcellular location is the extracellular space. The protein localises to the extracellular matrix. In terms of biological role, type I collagen is a member of group I collagen (fibrillar forming collagen). The sequence is that of Collagen alpha-2(I) chain from Doedicurus sp. (South American giant glyptodont).